A 287-amino-acid polypeptide reads, in one-letter code: Stomatin-like protein 3 (287 aa).

At S3 the chain carries Phosphoserine. A helical; Signal-anchor for type III membrane protein transmembrane segment spans residues 25–45 (WILFFLSFLLMLVTFPISVWM). At 46–287 (CLKIIKEYER…GNNKKVTAKA (242 aa)) the chain is on the cytoplasmic side. Position 237 is a phosphoserine (S237).

The protein belongs to the band 7/mec-2 family. As to quaternary structure, homodimer. Interacts with PIEZO1 and PIEZO2. Expressed by all dorsal root ganglion neurons and is selectively expressed in neuronal tissues. Detected in olfactory epithelium.

The protein resides in the cell membrane. Functionally, required for the function of many mechanoreceptors. Modulate mechanotransduction channels and acid-sensing ion channels (ASIC) proteins. Potentiates PIEZO1 and PIEZO2 function by increasing their sensitivity to mechanical stimulations. This chain is Stomatin-like protein 3 (Stoml3), found in Mus musculus (Mouse).